The sequence spans 178 residues: ATP-dependent protease subunit HslV (178 aa).

Residue threonine 7 is part of the active site. Positions 162, 165, and 168 each coordinate Na(+).

This sequence belongs to the peptidase T1B family. HslV subfamily. As to quaternary structure, a double ring-shaped homohexamer of HslV is capped on each side by a ring-shaped HslU homohexamer. The assembly of the HslU/HslV complex is dependent on binding of ATP.

It localises to the cytoplasm. It carries out the reaction ATP-dependent cleavage of peptide bonds with broad specificity.. Allosterically activated by HslU binding. In terms of biological role, protease subunit of a proteasome-like degradation complex believed to be a general protein degrading machinery. The chain is ATP-dependent protease subunit HslV from Herminiimonas arsenicoxydans.